The following is a 1194-amino-acid chain: UPF0507 protein PICST_55861 (1194 aa).

Residues 324–475 (QSYDPEAVKF…LSSSLSDELS (152 aa)) enclose the VPS9 domain.

It belongs to the UPF0507 family.

The chain is UPF0507 protein PICST_55861 from Scheffersomyces stipitis (strain ATCC 58785 / CBS 6054 / NBRC 10063 / NRRL Y-11545) (Yeast).